Consider the following 483-residue polypeptide: Glutathione reductase (483 aa).

An N-acetylmethionine modification is found at methionine 1. An N-acetylserine modification is found at leucine 2. 2 residues coordinate FAD: serine 33 and glycine 34. A glutathione-binding site is contributed by serine 33. Glutathione is bound at residue arginine 40. 4 residues coordinate FAD: glutamate 53, threonine 60, cysteine 61, and lysine 69. An intrachain disulfide couples cysteine 61 to cysteine 66. Tyrosine 123 lines the glutathione pocket. Alanine 139 is an FAD binding site. Positions 205, 208, 211, 228, and 234 each coordinate NADP(+). A glutathione-binding site is contributed by threonine 243. Asparagine 278 carries N-linked (GlcNAc...) asparagine glycosylation. Glycine 294 serves as a coordination point for NADP(+). Aspartate 334 is a binding site for FAD. Glutamate 340 is a binding site for NADP(+). Position 342 (threonine 342) interacts with FAD. Residue arginine 350 coordinates glutathione. NADP(+) is bound at residue valine 375. Residue lysine 425 participates in glutathione binding. Position 472 (histidine 472) interacts with FAD. The active-site Proton acceptor is histidine 472.

It belongs to the class-I pyridine nucleotide-disulfide oxidoreductase family. In terms of assembly, homodimer. FAD serves as cofactor.

It is found in the cytoplasm. Its subcellular location is the nucleus. The protein localises to the mitochondrion. The protein resides in the peroxisome. The catalysed reaction is 2 glutathione + NADP(+) = glutathione disulfide + NADPH + H(+). Its function is as follows. Catalyzes the reduction of glutathione disulfide (GSSG) to reduced glutathione (GSH). Constitutes the major mechanism to maintain a high GSH:GSSG ratio in the cytosol. The polypeptide is Glutathione reductase (Saccharomyces cerevisiae (strain ATCC 204508 / S288c) (Baker's yeast)).